Here is a 232-residue protein sequence, read N- to C-terminus: Lipid A 1-phosphatase (232 aa).

6 helical membrane passes run 10-30 (LFIT…PVGA), 42-62 (ELLT…LLFF), 80-100 (ALYV…SGLL), 136-156 (FPSG…LLFP), 160-180 (VAFI…GAHY), and 183-203 (DVIA…IVYA).

This sequence belongs to the lipid A LpxE 1-phosphatase family.

The protein resides in the cell inner membrane. The protein operates within bacterial outer membrane biogenesis; LPS lipid A biosynthesis. In terms of biological role, probably removes the 1-phosphate moiety from lipid A species. Does not seem to act on other membrane components, nor does it dephosphorylate the 4'-phosphate group of lipid A and/or lipid A precursors. The sequence is that of Lipid A 1-phosphatase from Rhizobium etli (strain ATCC 51251 / DSM 11541 / JCM 21823 / NBRC 15573 / CFN 42).